The chain runs to 85 residues: Small ribosomal subunit protein bS16 (85 aa).

Belongs to the bacterial ribosomal protein bS16 family.

The protein is Small ribosomal subunit protein bS16 of Pseudomonas savastanoi pv. phaseolicola (strain 1448A / Race 6) (Pseudomonas syringae pv. phaseolicola (strain 1448A / Race 6)).